Here is a 558-residue protein sequence, read N- to C-terminus: Formate--tetrahydrofolate ligase 2 (558 aa).

Residue 67 to 74 (TPAGEGKT) coordinates ATP.

Belongs to the formate--tetrahydrofolate ligase family.

It carries out the reaction (6S)-5,6,7,8-tetrahydrofolate + formate + ATP = (6R)-10-formyltetrahydrofolate + ADP + phosphate. It participates in one-carbon metabolism; tetrahydrofolate interconversion. The polypeptide is Formate--tetrahydrofolate ligase 2 (Desulfitobacterium hafniense (strain Y51)).